The primary structure comprises 506 residues: CDK5 regulatory subunit-associated protein 3 (506 aa).

3 short sequence motifs (shuffled ATG8-binding motif) span residues 267–270 (IDWG), 292–295 (IDWG), and 310–313 (IDWG). The tract at residues 269–506 (WGDFGVEAVS…RPVNLMGTSL (238 aa)) is required for interaction with UFL1 and mediates interaction with CHEK1. The interval 355–370 (DELMELEIFLAQRAVE) is RPL10a-binding domain (RBD). Residue K450 forms a Glycyl lysine isopeptide (Lys-Gly) (interchain with G-Cter in SUMO2) linkage.

Belongs to the CDK5RAP3 family. As to quaternary structure, substrate adapter component of the UFM1 ribosome E3 ligase (UREL) complex, composed of UFL1, DDRGK1 and CDK5RAP3. Interaction with UFL1 anchors CDK5RAP3 in the cytoplasm, preventing its translocation to the nucleus which allows expression of the CCND1 cyclin and progression of cells through the G1/S transition. Interacts with ATG8 family proteins MAP1LC3A, MAP1LC3B, GABARAP, GABARAPL1 and GABARAPL2. Interacts with CDK5R1; competes with CDK5RAP1 and CDK5RAP2. Interacts with RELA. Interacts with CHEK1; may negatively regulate CHEK1 and thereby stimulate entry into mitosis. Interacts with CDKN2A/ARF and MDM2; forms a ternary complex involved in regulation of p53/TP53. Interacts with MAPK14. Interacts with CCNB1. Interacts with TUBG1; may regulate CDK5RAP3 in mitotic G2/M transition checkpoint. In terms of assembly, (Microbial infection) Interacts with hepatitis B virus large envelope protein mutant pre-s2; promotes mitotic entry. Post-translationally, may be phosphorylated by CDK5. In terms of processing, ubiquitinated. Probably triggers proteasomal degradation and is negatively regulated by UFL1. May be ufmylated. Post-translationally, cleaved by caspases early during apoptosis, the resulting peptides may play a role in rupture of the nuclear envelope. As to expression, ubiquitously expressed. Expressed in heart, brain, placenta, lung, liver, skeletal muscle, kidney and pancreas. Isoform 3 is expressed in kidney, liver, skeletal muscle and placenta.

Its subcellular location is the endoplasmic reticulum membrane. It localises to the cytoplasm. It is found in the nucleus. The protein localises to the cytoskeleton. The protein resides in the microtubule organizing center. Its subcellular location is the centrosome. Functionally, substrate adapter of E3 ligase complexes mediating ufmylation, the covalent attachment of the ubiquitin-like modifier UFM1 to substrate proteins, and which is involved in various processes, such as ribosome recycling and reticulophagy (also called ER-phagy). As part of the UREL complex, plays a key role in ribosome recycling by promoting mono-ufmylation of RPL26/uL24 subunit of the 60S ribosome. Ufmylation of RPL26/uL24 occurs on free 60S ribosomes following ribosome dissociation: it weakens the junction between post-termination 60S subunits and SEC61 translocons, promoting release and recycling of the large ribosomal subunit from the endoplasmic reticulum membrane. Ufmylation of RPL26/uL24 and subsequent 60S ribosome recycling either take place after normal termination of translation or after ribosome stalling during cotranslational translocation at the endoplasmic reticulum. Within the UREL complex, CDK5RAP3 acts as a substrate adapter that constrains UFL1 ligase activity to mono-ufmylate RPL26/uL24 at 'Lys-134'. The UREL complex is also involved in reticulophagy in response to endoplasmic reticulum stress by promoting ufmylation of proteins such as CYB5R3, thereby promoting lysosomal degradation of ufmylated proteins. Also acts as a regulator of transcription: negatively regulates NF-kappa-B-mediated gene transcription through the control of RELA phosphorylation. Also regulates mitotic G2/M transition checkpoint and mitotic G2 DNA damage checkpoint. Through its interaction with CDKN2A/ARF and MDM2 may induce MDM2-dependent p53/TP53 ubiquitination, stabilization and activation in the nucleus, thereby promoting G1 cell cycle arrest and inhibition of cell proliferation. May also play a role in the rupture of the nuclear envelope during apoptosis. May regulate MAPK14 activity by regulating its dephosphorylation by PPM1D/WIP1. Required for liver development. (Microbial infection) May be negatively regulated by hepatitis B virus large envelope protein mutant pre-s2 to promote mitotic entry. The protein is CDK5 regulatory subunit-associated protein 3 of Homo sapiens (Human).